A 104-amino-acid polypeptide reads, in one-letter code: Fusaric acid biosynthesis protein 2 (104 aa).

The protein belongs to the YciI family.

Its pathway is mycotoxin biosynthesis. Functionally, part of the gene cluster that mediates the biosynthesis of fusaric acid, a mycotoxin with low to moderate toxicity to animals and humans, but with high phytotoxic properties. L-aspartate is suggested as fusaric acid amino acid precursor that is activated and further processed to O-acetyl-L-homoserine by cluster enzymes aspartate kinase FUB3 and homoserine O-acetyltransferase FUB5, as well as enzymes of the primary metabolism. The polyketide synthase (PKS) FUB1 generates the triketide trans-2-hexenal which is presumptively released by the hydrolase FUB4 and linked to the NRPS-bound amino acid precursor by NAD(P)-dependent dehydrogenase FUB6. FUB1, FUB4, and the non-canonical NRPS Fub8 may form an enzyme complex. Further processing of the NRPS-bound intermediate might be carried out by FUB6 and the sulfhydrylase FUB7, enabling a spontaneous electrocyclization to close the carbon backbone of fusaric acid. Dihydrofusaric acid is likely to be released via reduction by the thioester reductase (TR) domain of FUB8 whereupon the final oxidation to fusaric acid may (also) be performed by the FMN-dependent dehydrogenase FUB9. This chain is Fusaric acid biosynthesis protein 2, found in Gibberella moniliformis (strain M3125 / FGSC 7600) (Maize ear and stalk rot fungus).